The following is a 457-amino-acid chain: Methylenetetrahydrofolate--tRNA-(uracil-5-)-methyltransferase TrmFO (457 aa).

8–13 (GGGLAG) is an FAD binding site.

It belongs to the MnmG family. TrmFO subfamily. The cofactor is FAD.

It localises to the cytoplasm. It carries out the reaction uridine(54) in tRNA + (6R)-5,10-methylene-5,6,7,8-tetrahydrofolate + NADH + H(+) = 5-methyluridine(54) in tRNA + (6S)-5,6,7,8-tetrahydrofolate + NAD(+). The enzyme catalyses uridine(54) in tRNA + (6R)-5,10-methylene-5,6,7,8-tetrahydrofolate + NADPH + H(+) = 5-methyluridine(54) in tRNA + (6S)-5,6,7,8-tetrahydrofolate + NADP(+). Functionally, catalyzes the folate-dependent formation of 5-methyl-uridine at position 54 (M-5-U54) in all tRNAs. This is Methylenetetrahydrofolate--tRNA-(uracil-5-)-methyltransferase TrmFO from Thermosynechococcus vestitus (strain NIES-2133 / IAM M-273 / BP-1).